We begin with the raw amino-acid sequence, 183 residues long: A-type ATP synthase subunit E (183 aa).

Belongs to the V-ATPase E subunit family. In terms of assembly, has multiple subunits with at least A(3), B(3), C, D, E, F, H, I and proteolipid K(x).

The protein localises to the cell membrane. In terms of biological role, component of the A-type ATP synthase that produces ATP from ADP in the presence of a proton gradient across the membrane. The polypeptide is A-type ATP synthase subunit E (Methanococcoides burtonii (strain DSM 6242 / NBRC 107633 / OCM 468 / ACE-M)).